A 117-amino-acid polypeptide reads, in one-letter code: Huntingtin-interacting protein M (117 aa).

Disordered stretches follow at residues 1 to 30 and 71 to 117; these read MSEK…VPRS and EASN…RKND. Residues 72 to 81 are compositionally biased toward polar residues; sequence ASNNGSMRNT. Over residues 82–117 the composition is skewed to basic and acidic residues; it reads SQDREREVDNNREPHSAESDVTRFLFDEMPKSRKND.

As to quaternary structure, may interact with the N-terminus of HD.

This chain is Huntingtin-interacting protein M, found in Homo sapiens (Human).